The primary structure comprises 3164 residues: MYKEAERPIEVWRTQVMDGPTWTALSEPCRNRLFFASGKGGEHLTLDVIQPDSYTKIRLFRSGRFEVSVDGKSFGQGGNRYRFVFRYDSLLSTPFGYPAEDKEMALQGYNHEQLLGEMFLKLPDSYVDGRPIAEAFFRYVDDLKWDVGVFRDRRSLTELHLPASSGLTTEQARVAKLEWPPLPIIQAQPTILAGIIDNFKICFPVNGKWVYGQGLSWTRYDGDASVPISLLTNRQHARFWNDKDVPTGLKLSKEGFIKLWAQKSRKWQDHMARAIGLSHAATAELVRATKVNEAKPHLVPMEEAKEAPRQQLVPRRSTFVDSHEKGVEVDPLRLPTEEGRCFELLFNNQVTPAIFDKKPLLRDVLAVFKENVCTMDSLEISHSDRCVHIVTGETFRNYKEIKAVLEVIIWNDPNILVGAEEGSIADYVKAGKHFLFENHQWVRNGLKLAKGLAEPGQLAKDNTNPSTPKPIETTDYIHPFDNGQPLPGRSDQWVSGFEVTRLRHHEEMPHIRNVRNTGIHGLPGDFLSNYPRLPTPVFHRLRDLWYDVIGILMKLEFGDNRSPVLNVTANADWVRSETTVNFISDQPGKARSRPRKDGGFDILVPCRGIATRSIRLLPLFIRLPPRFKAVALLNGRQSDYDNYGWPVFNPVIPLPQIDSFYVEAVAAGRSMYPPGFLLDRYDALGFLIHTATVYGAEEAFLLPFTHHARVYPPPRPGREIAFGSWCKNYKFTAERYWYDADWKLRVHETNHDFDRLIEITKTCRRNPPEENLQARLKDTAREVCSIWQYNIMIASSVAFLIPLFYTLYVPYLQFYLHVDPGDYMLLPPVLWLVWTNLCYGYACDAWCRLFFFVEEAGKKELVHSSEEFSSDPSSTLLIPTMGTRGDHVPPRFFANMAVLAGVKTHLLKLQTATYGDLENLKKGKLGSLLPGYLQNHYSVLRGYKAVFTPHVELDMPNATSYNLAPPRSYINKIRYLTDENRSGASIVDRAVTWFAEELADTFWPDWQIGCLRGCNLPRSADGVSLITKRPNLKTGKIGWLHGSADPAVVPKDIRDRYPLVPNGDHNEIFRHYDKIYMPGGAGAVQTAIACGCEVVVTDVNLDRDYHTMPTQKDFHQPSILPYFAWLWRQGFDVKLPRVLLVVGWLKFHYSIRYKHLEFAADFVIRAGLFWWYGCLHLLPFMAAAIMTPRFVKKYLVSMAWLTEPGLLMLKALWRFPIFMVTPRWMLPFIVTVSAYNWWWPLSQDGLNYASKRFELIFEPVARGKYTFSYPFGHWCLRDTNSMIIYEGKFVDSSETSIGSPFKLSKSVRPVRPGAVFHLVPFHIQKLLDSMDEEPLPYSANHNCTTVILKGIMYRSALGFVFAYAVSWAVYLVLRPPQAAATVYHWMYPERSWDTSRLYHLLGFAAGGTVPMEVIDEEPIEEKPSDAGRSEPIPDNDKQEESDYDQEWWGSQDSIDTVSNDLCYLLSFLKDTAIPEEVKLDVIELAYTQFVRNEKGRIPEPKETRILVMPNWKPDNWARLIDETHRVLSQFTHYTPRVLNELVVWLKGLGENLYRVAEPILMLLVRAMRAAKSVSDRATRSIYHCLCHWLDVMYGGSAPTRVKTVWGLTGLIASGMTSQKAILAQNIAMMEYQGRGNFLDDYDNFVSNIKEPGKGLPGINTIGGPQRRPIRYKNPVMSHQAAEICGLKPGEYEVDEKYQERINDYLAEGIPQAVDGVLFGDRNPDRIARSINRYEPEYSGCSPEDKALVEDTARAMFEQWPEVFADRDIMLPKGVELYIKEKYSAGTPFISSFYKSRKALKQAGVMDVIRKNALECIKTGKYPTQFYHAFAKSQAVPGQPLLAPRMKDLRTVVSEDLSAYMVDQIFQIEANKRITWETYGAGSGMPLSQSMARIWDELHDLRKREGGQFIIADATAYDSNCKPVLFHGAGKLVELGFQNHPSGKGRQFAQVVQCKFEAMQNAWVMGITEPSYSALTFHVPDAEVRRDLESKFPRHFVTFSELLEHNNMNVTEWKRLTWEEQKACARDMQSVPGKVFLTNDPALRLQGSSWQGSFTTEPKRDEFRKYQTYFCNSKEAMKEDIKRIVFANREVISNVHHKNRGGGTGQSATSWDNTATFKLGVISAWARATGKLPKDFFCSNRLYNTSDDTVWWSKDLLSSAEVDRFKQAAADFGILLEIGSTKKITEVEYLSKLPRRPTAEDSADYRTWRQGRIENMRSSGRFTEEQMLSIEREQLPQFLMVQNPTAILMRRTAFRYYQSSPSKFLYTSCERGAGHALVTAFQPALYKRFAIEYAEDLNRLCKEHHINQRYELVSQQDRIKMQVINVNPNWKQGFRLSPRQEAFLRWIRQAKFPSYRQVLDIHLRTKDPDPSAHDRFIAKLDRAWRNPDEGIRDMVDGVYRYTDLIPEEFKRFMPSTDMLYAENPWHTHNQYVEKFIYLKLLETTTVDELTFAQFDAVAKESPYGICMNTIKFWEDLRDPDYLKDLLASEAMIDKVRIYQGMTVIISAMYFAMHWVELFVQSLFLIGPLYNLFMWSFWGLSKVYGLANTFYWHGKARSSREISSIMPRDPYMWSKRFVSTMADFIPERFALGLVPATLILDGLAEIIEVLFGRMWRMFANLKSVGTDFGDARSGKSLNVPSNPWAAYAHTYATKAIEHGHVTVAAKTASGKSTFFPAAVWAERRNIGVKKLWIVMPRKILRDNWEIPFDIRSQIVKRGKTLDPTADIYITTYGHFRTRIGGLVPRDNLVFFDEFHEMDGFMLQDVEEWKGPTIFMSATPVALHGMADIPFLEPTLPKRFNLTVYKVDSDDVLEMWNRARNQFADQPALLARPMIIVPTYNELKKTIAGLENLDRSVTWHEVSSNSPFVPKTGGLVCTPYVQTGIDIKPAPSILIDSGRDVVVHKGRLITPHPYTDEKTNEQRVNRVGRTMDGVVIQPQLAGTGDPPVKYPSGIFFSSRLVAGQYRVPRLTEVDGCVHPELPYISIKYTSELSNPVEAKKEEQNVRKSLLFIHLMALAGVRQSEWALRYNRYFELHLPFGEDEDHLQRILEQGKLRYAHHIPVDMAMQLLGNGHVTWGIGGVPTITRPRYPCDGMWVEDPSSRKSYVHKVLLHQREHAEIGMWQAQVNELKAQKLALQSQLRSVCTRRSTASRILRHIRPPDIPVCG.

In terms of domain architecture, Peptidase C8 spans Met-271–Gly-418. Residues Cys-341 and His-388 each act as for papain-like protease p48 activity in the active site. 6 helical membrane-spanning segments follow: residues Leu-684–Phe-704, Ile-791–Tyr-811, Tyr-823–Cys-843, Ala-1166–Met-1186, Phe-1215–Tyr-1235, and Ala-1356–Pro-1376. The disordered stretch occupies residues Ile-1419–Gln-1445. The segment at Phe-1792–Trp-2207 is RNA-directed RNA polymerase. Transmembrane regions (helical) follow at residues Val-2494 to Val-2514, Leu-2516 to Trp-2536, and Leu-2589 to Phe-2609. Residues Ala-2650–Lys-2795 form the Helicase ATP-binding domain. Residue Ala-2663–Ser-2670 coordinates ATP. Residues Asp-2750–His-2753 carry the DEFH box motif.

In the C-terminal section; belongs to the DEAD box helicase family. Post-translationally, papain-like protease p48 is autocatalytically processed. The putative RNA-directed RNA polymerase/helicase is probably further processed.

The protein resides in the host membrane. It catalyses the reaction RNA(n) + a ribonucleoside 5'-triphosphate = RNA(n+1) + diphosphate. The enzyme catalyses ATP + H2O = ADP + phosphate + H(+). In terms of biological role, papain-like protease p48 is a cysteine protease of the peptidase family C8. In Cryphonectria parasitica (Chestnut blight fungus), this protein is ORFB polyprotein.